The sequence spans 311 residues: Probable manganese-dependent inorganic pyrophosphatase (311 aa).

Mn(2+) contacts are provided by H9, D13, D15, D77, H99, and D151.

This sequence belongs to the PPase class C family. As to quaternary structure, homodimer. Mn(2+) is required as a cofactor.

The protein localises to the cytoplasm. The catalysed reaction is diphosphate + H2O = 2 phosphate + H(+). The protein is Probable manganese-dependent inorganic pyrophosphatase (ppaC) of Streptococcus gordonii (strain Challis / ATCC 35105 / BCRC 15272 / CH1 / DL1 / V288).